A 340-amino-acid chain; its full sequence is Ferredoxin--NADP reductase (340 aa).

D33, Q41, Y46, A86, F120, D286, and T327 together coordinate FAD.

It belongs to the ferredoxin--NADP reductase type 2 family. In terms of assembly, homodimer. Requires FAD as cofactor.

The catalysed reaction is 2 reduced [2Fe-2S]-[ferredoxin] + NADP(+) + H(+) = 2 oxidized [2Fe-2S]-[ferredoxin] + NADPH. The protein is Ferredoxin--NADP reductase of Rickettsia rickettsii (strain Iowa).